A 265-amino-acid chain; its full sequence is 4-hydroxy-tetrahydrodipicolinate reductase (265 aa).

NAD(+) is bound at residue 9 to 14 (GARGKM). Lys37 lines the NADP(+) pocket. NAD(+) contacts are provided by residues 99-101 (GTT) and 125-128 (APNF). Residue His155 is the Proton donor/acceptor of the active site. His156 is a (S)-2,3,4,5-tetrahydrodipicolinate binding site. Lys159 (proton donor) is an active-site residue. 165 to 166 (GT) provides a ligand contact to (S)-2,3,4,5-tetrahydrodipicolinate.

It belongs to the DapB family.

It localises to the cytoplasm. The enzyme catalyses (S)-2,3,4,5-tetrahydrodipicolinate + NAD(+) + H2O = (2S,4S)-4-hydroxy-2,3,4,5-tetrahydrodipicolinate + NADH + H(+). It carries out the reaction (S)-2,3,4,5-tetrahydrodipicolinate + NADP(+) + H2O = (2S,4S)-4-hydroxy-2,3,4,5-tetrahydrodipicolinate + NADPH + H(+). The protein operates within amino-acid biosynthesis; L-lysine biosynthesis via DAP pathway; (S)-tetrahydrodipicolinate from L-aspartate: step 4/4. Functionally, catalyzes the conversion of 4-hydroxy-tetrahydrodipicolinate (HTPA) to tetrahydrodipicolinate. The protein is 4-hydroxy-tetrahydrodipicolinate reductase of Lysinibacillus sphaericus (strain C3-41).